We begin with the raw amino-acid sequence, 238 residues long: Probable transcriptional regulatory protein SPH_2064 (238 aa).

It belongs to the TACO1 family. YeeN subfamily.

It localises to the cytoplasm. The protein is Probable transcriptional regulatory protein SPH_2064 of Streptococcus pneumoniae (strain Hungary19A-6).